The following is a 486-amino-acid chain: Elastin-binding protein EbpS (486 aa).

Positions 1 to 40 (MSNNFKDDFEKNRQSIDTNSHQDHTEDVEKDQSELEHQDT) are enriched in basic and acidic residues. Positions 1–314 (MSNNFKDDFE…NHDRDKERKK (314 aa)) are disordered. Residues 2–204 (SNNFKDDFEK…EPKEHHNGKK (203 aa)) lie on the Extracellular side of the membrane. The interval 14–34 (QSIDTNSHQDHTEDVEKDQSE) is elastin-binding. Over residues 64–85 (TNHNKQVHNESQTSEDNVQNEA) the composition is skewed to polar residues. Composition is skewed to basic and acidic residues over residues 103–118 (EPSH…EEYY) and 126–143 (DKSH…DTIK). Polar residues predominate over residues 161 to 179 (EQSQQPKPYFTTGANQSET). Positions 180 to 199 (SKNEHDNDSVKQDQDEPKEH) are enriched in basic and acidic residues. Low complexity predominate over residues 204 to 225 (KAAAIGAGTAGVAGAAGAMAAS). The helical transmembrane segment at 205–225 (AAAIGAGTAGVAGAAGAMAAS) threads the bilayer. Residues 226 to 319 (KAKKHSNDAQ…KERKKGGMAK (94 aa)) lie on the Cytoplasmic side of the membrane. Over residues 233–246 (DAQNKSNSGKANNS) the composition is skewed to polar residues. Residues 247–259 (TEDKASQDKSKDH) show a composition bias toward basic and acidic residues. The span at 278-297 (GAASKSASAASKPHASNNAS) shows a compositional bias: low complexity. Over residues 299-314 (NHDEHDNHDRDKERKK) the composition is skewed to basic and acidic residues. The helical transmembrane segment at 320–340 (VLLPLIAAVLIIGALAIFGGM) threads the bilayer. Residues 341-486 (ALNNHNNGTK…IRNGQQIVIP (146 aa)) are Extracellular-facing. The tract at residues 351–440 (ENKIANTNKN…QRQGGGQRHT (90 aa)) is disordered. Basic and acidic residues predominate over residues 361–398 (NADESKDKDTSKDASKDKSKSTDSDKSKEDQDKATKDE). Residues 403 to 431 (QNNANQANNQAQNNQNQQQANQNQQQQQQ) are compositionally biased toward low complexity. Positions 437–485 (QRHTVNGQENLYRIAIQYYGSGSPENVEKIRRANGLSGNNIRNGQQIVI) constitute a LysM domain.

It localises to the cell membrane. Its function is as follows. Promotes binding of soluble elastin peptides and tropoelastin to S.aureus cells although it is not able to promote bacterial adherence to immobilized elastin and, therefore, is not a microbial surface component recognizing adhesive matrix molecule (MSCRAMM). The sequence is that of Elastin-binding protein EbpS (ebpS) from Staphylococcus aureus (strain USA300).